We begin with the raw amino-acid sequence, 500 residues long: Bifunctional protein GlmU (500 aa).

The segment at 1–242 (MPVQTAVVVL…SAKVAGANDR (242 aa)) is pyrophosphorylase. UDP-N-acetyl-alpha-D-glucosamine-binding positions include 10-13 (LAAG), lysine 24, glutamine 81, and 86-87 (GT). Aspartate 112 provides a ligand contact to Mg(2+). The UDP-N-acetyl-alpha-D-glucosamine site is built by glycine 151, glutamate 167, asparagine 182, and asparagine 240. Asparagine 240 is a binding site for Mg(2+). The interval 243-263 (VQLSRLAAELNRRTVENWMRA) is linker. Positions 264–500 (GVTVVDPSTT…KQDLKDGIEQ (237 aa)) are N-acetyltransferase. The UDP-N-acetyl-alpha-D-glucosamine site is built by arginine 345 and lysine 363. Histidine 375 acts as the Proton acceptor in catalysis. The UDP-N-acetyl-alpha-D-glucosamine site is built by tyrosine 378 and asparagine 389. Acetyl-CoA contacts are provided by residues alanine 392, 398–399 (NY), serine 417, and alanine 435. The disordered stretch occupies residues 459-500 (DGWVQRNRPGTPAAEAASAAGPHHSSDLHETEKQDLKDGIEQ). Residues 482-500 (HSSDLHETEKQDLKDGIEQ) are compositionally biased toward basic and acidic residues.

This sequence in the N-terminal section; belongs to the N-acetylglucosamine-1-phosphate uridyltransferase family. In the C-terminal section; belongs to the transferase hexapeptide repeat family. As to quaternary structure, homotrimer. Mg(2+) serves as cofactor.

The protein localises to the cytoplasm. It carries out the reaction alpha-D-glucosamine 1-phosphate + acetyl-CoA = N-acetyl-alpha-D-glucosamine 1-phosphate + CoA + H(+). The enzyme catalyses N-acetyl-alpha-D-glucosamine 1-phosphate + UTP + H(+) = UDP-N-acetyl-alpha-D-glucosamine + diphosphate. Its pathway is nucleotide-sugar biosynthesis; UDP-N-acetyl-alpha-D-glucosamine biosynthesis; N-acetyl-alpha-D-glucosamine 1-phosphate from alpha-D-glucosamine 6-phosphate (route II): step 2/2. It participates in nucleotide-sugar biosynthesis; UDP-N-acetyl-alpha-D-glucosamine biosynthesis; UDP-N-acetyl-alpha-D-glucosamine from N-acetyl-alpha-D-glucosamine 1-phosphate: step 1/1. The protein operates within bacterial outer membrane biogenesis; LPS lipid A biosynthesis. Its function is as follows. Catalyzes the last two sequential reactions in the de novo biosynthetic pathway for UDP-N-acetylglucosamine (UDP-GlcNAc). The C-terminal domain catalyzes the transfer of acetyl group from acetyl coenzyme A to glucosamine-1-phosphate (GlcN-1-P) to produce N-acetylglucosamine-1-phosphate (GlcNAc-1-P), which is converted into UDP-GlcNAc by the transfer of uridine 5-monophosphate (from uridine 5-triphosphate), a reaction catalyzed by the N-terminal domain. This Rhodococcus opacus (strain B4) protein is Bifunctional protein GlmU.